The following is a 240-amino-acid chain: Prolactin-8A6 (240 aa).

A signal peptide spans 1–30 (MALLLSQPHFSGPLLLLVVSNLLLWEKAAS). Intrachain disulfides connect Cys34–Cys41, Cys101–Cys216, and Cys233–Cys240. A glycan (N-linked (GlcNAc...) asparagine) is linked at Asn212.

Belongs to the somatotropin/prolactin family. Expressed specifically in the spongiotrophoblast and trophoblast giant cells from the junctional zone of the chorioallantoic placenta.

It localises to the secreted. The polypeptide is Prolactin-8A6 (Prl8a6) (Mus musculus (Mouse)).